A 227-amino-acid polypeptide reads, in one-letter code: Iron-regulated surface determinant protein C (227 aa).

Positions 1–28 are cleaved as a signal peptide; it reads MKNILKVFNTMILALIIIIATFSNTANA. An NEAT domain is found at 29–150; it reads ADSGTLNYEV…KFNGPSDVAG (122 aa). Heme-binding residues include serine 47, isoleucine 48, tyrosine 132, and tyrosine 136. The tract at residues 149–191 is disordered; sequence AGANAPGKDDKNSASGSDKGSDGATTGQSESNSSNKDKVENPQ. Positions 161–172 are enriched in low complexity; it reads SASGSDKGSDGA. The segment covering 173–182 has biased composition (polar residues); the sequence is TTGQSESNSS. Residues 189–193 carry the NPQTN sorting signal motif; it reads NPQTN. Pentaglycyl murein peptidoglycan amidated threonine is present on threonine 192. A propeptide spans 193 to 227 (removed by sortase B); the sequence is NAGTPAYIYAIPVASLALLIAITLFVRKKSKGNVE.

Belongs to the IsdC family. Monomer. Interacts with IsdA.

The protein resides in the secreted. It is found in the cell wall. In terms of biological role, involved in heme (porphyrin) scavenging. Binds hemoglobin and almost exclusively free-base protoporphyrin IX. Probably has a role as the central conduit of the isd heme uptake system, i.e. mediates the transfer of the iron-containing nutrient from IsdABH to the membrane translocation system IsdDEF. Hemin-free IsdC (apo-IsdC) acquires hemin from hemin-containing IsdA (holo-IsdA) probably through the activated holo-IsdA-apo-IsdC complex and due to the higher affinity of apo-IsdC for the cofactor. The reaction is reversible. The chain is Iron-regulated surface determinant protein C (isdC) from Staphylococcus aureus (strain MRSA252).